The following is a 391-amino-acid chain: Elongation factor Tu (391 aa).

Residues 10–201 (KPHVNIGTIG…EVDKYIPTPE (192 aa)) enclose the tr-type G domain. Residues 19-26 (GHVDHGKT) form a G1 region. 19 to 26 (GHVDHGKT) contributes to the GTP binding site. A Mg(2+)-binding site is contributed by Thr-26. The G2 stretch occupies residues 55–59 (GITIS). The segment at 76-79 (DCPG) is G3. GTP-binding positions include 76 to 80 (DCPGH) and 131 to 134 (NKVD). A G4 region spans residues 131 to 134 (NKVD). Residues 169 to 171 (SAL) form a G5 region.

Belongs to the TRAFAC class translation factor GTPase superfamily. Classic translation factor GTPase family. EF-Tu/EF-1A subfamily. In terms of assembly, monomer.

It localises to the cytoplasm. The catalysed reaction is GTP + H2O = GDP + phosphate + H(+). Its function is as follows. GTP hydrolase that promotes the GTP-dependent binding of aminoacyl-tRNA to the A-site of ribosomes during protein biosynthesis. This is Elongation factor Tu from Chelativorans sp. (strain BNC1).